Consider the following 1233-residue polypeptide: Hemocyanin A-type, units Ode to Odg (1233 aa).

Residues 1-4 (EGNE) are ODD. Residues 5-422 (YLVRKNVERL…KQDADIDIPL (418 aa)) form an ODE region. A Cu cation-binding site is contributed by histidine 45. A disulfide bridge links cysteine 51 with cysteine 62. Residues 63–65 (CLH) constitute a cross-link (2'-(S-cysteinyl)-histidine (Cys-His)). 5 residues coordinate Cu cation: histidine 65, histidine 74, histidine 186, histidine 190, and histidine 217. 2 disulfides stabilise this stretch: cysteine 176–cysteine 243 and cysteine 334–cysteine 340. Asparagine 392 carries an N-linked (GlcNAc...) asparagine glycan. An ODF region spans residues 423–839 (NHIRRNVESL…KEIEKEAVRG (417 aa)). Histidine 463 serves as a coordination point for Cu cation. The cysteines at positions 468 and 478 are disulfide-linked. A cross-link (2'-(S-cysteinyl)-histidine (Cys-His)) is located at residues 479-481 (CLH). Cu cation contacts are provided by histidine 481 and histidine 490. Residue asparagine 538 is glycosylated (N-linked (GlcNAc...) asparagine). Intrachain disulfides connect cysteine 589-cysteine 656 and cysteine 743-cysteine 748. 3 residues coordinate Cu cation: histidine 599, histidine 603, and histidine 630. Residues 840 to 1233 (TIIRKNVNSL…VFLAPAKTTH (394 aa)) are ODG. Histidine 880 lines the Cu cation pocket. Cysteine 886 and cysteine 896 are joined by a disulfide. Asparagine 890 carries N-linked (GlcNAc...) asparagine glycosylation. Positions 897–899 (CQH) form a cross-link, 2'-(S-cysteinyl)-histidine (Cys-His). The Cu cation site is built by histidine 899, histidine 908, histidine 1008, histidine 1012, and histidine 1039. 2 disulfide bridges follow: cysteine 998-cysteine 1065 and cysteine 1152-cysteine 1158.

The protein belongs to the tyrosinase family. Hemocyanin subfamily. As to quaternary structure, decamers of large identical subunits (350 kDa), each containing 7 globular oxygen-binding domains: ODA, ODB, ODC, ODD, ODE, ODF, and ODG. Cu(2+) serves as cofactor.

In terms of biological role, hemocyanins are copper-containing oxygen carriers occurring freely dissolved in the hemolymph of many mollusks and arthropods. The sequence is that of Hemocyanin A-type, units Ode to Odg from Enteroctopus dofleini (North Pacific giant octopus).